A 299-amino-acid polypeptide reads, in one-letter code: Putative adenosine/adenine deaminase (299 aa).

Zn(2+) is bound by residues His-16 and His-18. His-18 and Gly-157 together coordinate substrate. Residue His-184 coordinates Zn(2+). Catalysis depends on Glu-187, which acts as the Proton donor. Asp-265 serves as a coordination point for Zn(2+). Residue Asp-266 participates in substrate binding.

This sequence belongs to the metallo-dependent hydrolases superfamily. Adenosine and AMP deaminases family. Requires Zn(2+) as cofactor.

Functionally, putative nucleoside deaminase. May catalyze the hydrolytic deamination of adenosine or some similar substrate and play a role in purine metabolism. In Treponema pallidum (strain Nichols), this protein is Putative adenosine/adenine deaminase.